A 496-amino-acid polypeptide reads, in one-letter code: RNA-binding motif protein, Y chromosome, family 1 member F/J (496 aa).

The 78-residue stretch at 8 to 85 (GKLFIGGLNR…KAIKVEQAKK (78 aa)) folds into the RRM domain. Disordered stretches follow at residues 81–345 (EQAK…YAPP) and 452–496 (KDQR…SSRY). Composition is skewed to low complexity over residues 97 to 114 (PASSRNRSPSGSLRSARG) and 149 to 159 (PVKRGPSSRSG). Residues 175–184 (NSWMGSQGPM) are compositionally biased toward polar residues. 6 stretches are compositionally biased toward basic and acidic residues: residues 204 to 214 (RNDRMSTRHDG), 242 to 253 (DNGHSNRDEHSS), 276 to 289 (AYRDYGHSRRDESY), 313 to 326 (GYRDYGHSRRHESY), 335 to 345 (SSRETRDYAPP), and 484 to 496 (GESRSEKGDSSRY).

As to quaternary structure, interacts with splicing factor proteins SFRS3/SRP20, TRA2B/SFRS10, KHDRBS1/SAM68 and KHDRBS3. Testis-specific.

The protein resides in the nucleus. Its function is as follows. RNA-binding protein which may be involved in spermatogenesis. Required for sperm development, possibly by participating in pre-mRNA splicing in the testis. The protein is RNA-binding motif protein, Y chromosome, family 1 member F/J (RBMY1F) of Homo sapiens (Human).